The sequence spans 233 residues: Outer membrane protein MIP (233 aa).

The first 20 residues, 1–20 (MKMKLVTAAVMGLAMSTAMA), serve as a signal peptide directing secretion. The PPIase FKBP-type domain maps to 144–233 (SDTVTVEYTG…IHLISVKKSS (90 aa)).

The protein belongs to the FKBP-type PPIase family.

The protein resides in the cell outer membrane. It carries out the reaction [protein]-peptidylproline (omega=180) = [protein]-peptidylproline (omega=0). Strongly inhibited by FK506 but is completely resistant to cyclosporin A. Its function is as follows. Essential virulence factor associated with macrophage infectivity. Exhibits PPIase activity. This is Outer membrane protein MIP (mip) from Legionella pneumophila subsp. pneumophila (strain Philadelphia 1 / ATCC 33152 / DSM 7513).